The chain runs to 151 residues: Ribosome maturation factor RimP (151 aa).

It belongs to the RimP family.

It is found in the cytoplasm. Its function is as follows. Required for maturation of 30S ribosomal subunits. The polypeptide is Ribosome maturation factor RimP (Saccharophagus degradans (strain 2-40 / ATCC 43961 / DSM 17024)).